The chain runs to 656 residues: Probable serine/threonine-protein kinase sky1 (656 aa).

Residues 1 to 127 (MSDIQQDSTS…KQGGYHPVRR (127 aa)) are disordered. Gly residues predominate over residues 16 to 48 (TSLGGTSLGGTSLGGTSLGGTSLGGTSLGGTSL). Composition is skewed to low complexity over residues 49–64 (GGST…STNS) and 72–89 (TSSN…NNNE). Residues 96–108 (AGSSNKSFMPLNN) show a composition bias toward polar residues. A Protein kinase domain is found at 135–648 (YQVVDKLGWG…AKDCLNHTWL (514 aa)). Position 141–149 (141–149 (LGWGHFSTV)) interacts with ATP. The tract at residues 157-185 (TPITTSSSSSSTTTTTTSSSSNGNGNGNG) is disordered. Over residues 160-179 (TTSSSSSSTTTTTTSSSSNG) the composition is skewed to low complexity. Lys197 is a binding site for ATP. Asp298 serves as the catalytic Proton acceptor. The interval 330 to 454 (RTSSSNKQSQ…TTATATATTT (125 aa)) is disordered. The segment covering 332–355 (SSSNKQSQQQQQPQQQQSQQNIND) has biased composition (low complexity). Basic and acidic residues-rich tracts occupy residues 383–401 (SNRD…DDNK) and 413–440 (ENTD…KEEP). The segment covering 441–454 (TTTTTTATATATTT) has biased composition (low complexity).

Belongs to the protein kinase superfamily. CMGC Ser/Thr protein kinase family.

It catalyses the reaction L-seryl-[protein] + ATP = O-phospho-L-seryl-[protein] + ADP + H(+). It carries out the reaction L-threonyl-[protein] + ATP = O-phospho-L-threonyl-[protein] + ADP + H(+). The protein is Probable serine/threonine-protein kinase sky1 (sky1) of Dictyostelium discoideum (Social amoeba).